A 422-amino-acid chain; its full sequence is Oxysterol-binding protein 7 (422 aa).

A disordered region spans residues 283 to 313 (EAAPASSASKKEKKKEKKKAKHSKHTCSPSD). Positions 293–307 (KEKKKEKKKAKHSKH) are enriched in basic residues. Residues 354–384 (MQAADQIKKEIEDEQRKRLQITKEEEKKERA) are a coiled coil. The disordered stretch occupies residues 402 to 422 (TLAPVSNSTSSTASDAASGSN). The segment covering 407 to 422 (SNSTSSTASDAASGSN) has biased composition (low complexity).

The protein belongs to the OSBP family.

The polypeptide is Oxysterol-binding protein 7 (osbG) (Dictyostelium discoideum (Social amoeba)).